A 648-amino-acid polypeptide reads, in one-letter code: SRSF protein kinase 1 (648 aa).

The interval 1–57 (MERKVLALQARKKRTKAKKDKAQRKPETQHRGSAPHSESDIPEQEEEILGSDDDEQE) is disordered. The segment covering 10–22 (ARKKRTKAKKDKA) has biased composition (basic residues). Positions 40–57 (DIPEQEEEILGSDDDEQE) are enriched in acidic residues. Ser-51 bears the Phosphoserine mark. Residues 80–646 (YHVIRKLGWG…AAECLRHPWL (567 aa)) form the Protein kinase domain. Residues 86-94 (LGWGHFSTV) and Lys-109 each bind ATP. Catalysis depends on Asp-213, which acts as the Proton acceptor. 2 disordered regions span residues 238-354 (WQRS…APEI) and 395-464 (PSFL…DSKG). Positions 265 to 276 (KNKKKKLKKKQK) are enriched in basic residues. Composition is skewed to basic and acidic residues over residues 277 to 288 (RQAELLEKRMQE) and 304 to 317 (NKQEESESPVDRPL). A phosphoserine mark is found at Ser-309, Ser-311, and Ser-333. Polar residues-rich tracts occupy residues 333 to 343 (SNSIGQDQTLT) and 396 to 441 (SFLN…TQLE). The residue at position 448 (Thr-448) is a Phosphothreonine. Ser-450 is modified (phosphoserine). The residue at position 548 (Ser-548) is a Phosphoserine; by CK2.

Belongs to the protein kinase superfamily. CMGC Ser/Thr protein kinase family. In terms of assembly, monomer. Found in a multisubunit complex containing seven proteins, named toposome, which separates entangled circular chromatin DNA during chromosome segregation. Interacts with HHV-1 ICP27 protein. Interacts with DNAJC8 and AHSA1/AHA1 and this mediates formation of a complex with the Hsp70 /Hsp90 machinery. Binds to IGF2BP1, SYNCRIP, HNRNPA2B1 and HNRNPC. Interacts with SAFB/SAFB1 and SAFB2 which inhibits its activity. Mg(2+) serves as cofactor. As to expression, predominantly expressed in the testis but is also present at lower levels in heart, spleen, liver, brain, kidney, lung and skeletal muscle. Present in all germinal cells in the seminiferous tubules but not in mature spermatozoa.

It localises to the cytoplasm. Its subcellular location is the nucleus. The protein localises to the nucleoplasm. The protein resides in the nucleus matrix. It is found in the microsome. It localises to the nucleus speckle. Its subcellular location is the chromosome. It catalyses the reaction L-seryl-[protein] + ATP = O-phospho-L-seryl-[protein] + ADP + H(+). The catalysed reaction is L-threonyl-[protein] + ATP = O-phospho-L-threonyl-[protein] + ADP + H(+). Activated by phosphorylation on Ser-51 and Ser-548. Its function is as follows. Serine/arginine-rich protein-specific kinase which specifically phosphorylates its substrates at serine residues located in regions rich in arginine/serine dipeptides, known as RS domains and is involved in the phosphorylation of SR splicing factors and the regulation of splicing. Plays a central role in the regulatory network for splicing, controlling the intranuclear distribution of splicing factors in interphase cells and the reorganization of nuclear speckles during mitosis. Can influence additional steps of mRNA maturation, as well as other cellular activities, such as chromatin reorganization in somatic and sperm cells and cell cycle progression. Phosphorylates SFRS2, ZRSR2, LBR and PRM1. Phosphorylates SRSF1 using a directional (C-terminal to N-terminal) and a dual-track mechanism incorporating both processive phosphorylation (in which the kinase stays attached to the substrate after each round of phosphorylation) and distributive phosphorylation steps (in which the kinase and substrate dissociate after each phosphorylation event). The RS domain of SRSF1 binds first to a docking groove in the large lobe of the kinase domain of SRPK1. This induces certain structural changes in SRPK1 and/or RRM2 domain of SRSF1, allowing RRM2 to bind the kinase and initiate phosphorylation. The cycles continue for several phosphorylation steps in a processive manner (steps 1-8) until the last few phosphorylation steps (approximately steps 9-12). During that time, a mechanical stress induces the unfolding of the beta-4 motif in RRM2, which then docks at the docking groove of SRPK1. This also signals RRM2 to begin to dissociate, which facilitates SRSF1 dissociation after phosphorylation is completed. Can mediate hepatitis B virus (HBV) core protein phosphorylation. It plays a negative role in the regulation of HBV replication through a mechanism not involving the phosphorylation of the core protein but by reducing the packaging efficiency of the pregenomic RNA (pgRNA) without affecting the formation of the viral core particles. Can induce splicing of exon 10 in MAPT/TAU. The sequence is that of SRSF protein kinase 1 from Mus musculus (Mouse).